A 183-amino-acid chain; its full sequence is ATP synthase subunit delta (183 aa).

It belongs to the ATPase delta chain family. As to quaternary structure, F-type ATPases have 2 components, F(1) - the catalytic core - and F(0) - the membrane proton channel. F(1) has five subunits: alpha(3), beta(3), gamma(1), delta(1), epsilon(1). F(0) has three main subunits: a(1), b(2) and c(10-14). The alpha and beta chains form an alternating ring which encloses part of the gamma chain. F(1) is attached to F(0) by a central stalk formed by the gamma and epsilon chains, while a peripheral stalk is formed by the delta and b chains.

Its subcellular location is the cell inner membrane. Functionally, f(1)F(0) ATP synthase produces ATP from ADP in the presence of a proton or sodium gradient. F-type ATPases consist of two structural domains, F(1) containing the extramembraneous catalytic core and F(0) containing the membrane proton channel, linked together by a central stalk and a peripheral stalk. During catalysis, ATP synthesis in the catalytic domain of F(1) is coupled via a rotary mechanism of the central stalk subunits to proton translocation. In terms of biological role, this protein is part of the stalk that links CF(0) to CF(1). It either transmits conformational changes from CF(0) to CF(1) or is implicated in proton conduction. In Ruthia magnifica subsp. Calyptogena magnifica, this protein is ATP synthase subunit delta.